Here is a 432-residue protein sequence, read N- to C-terminus: MSQSDIFFDHKHIWHPYSSMVNPLPCYSVISAKGVYLKLKNGKNIIDGMSSWWSTIHGYNHPILNKSLKKQIRKMSHVMFGGITHPSAILLCRKLLKLTPKKLDCVFLSDSGSIAIEVAIKMLIQYWEALGQKRTQILTIKNGYHGDTFSAMSISDPNNSMHKIYNKFLPKNLFAETPTSSFHKEWNSIDIQSFKKIIEKKSKKIAGVILEPIVQGVGGMNFYHPTYLKEIKKLCKAYSIPLVFDEIATGFGRTGKFFAFQHANVIPDILCLGKAMTGGTITLAATLTSRNIAHTISSSKVSCFMHGPTYMGNPLACAVANANIKILEKNEWKKQVINIEKQLCQSLLPLIHHPRVVDVRVLGAIGVVECFHFVNMALIQKFFVKNGVWIRPFKKIIYIVPPYIISMNCLKKLINVIEKSLDNDTLFNVENI.

W52 lines the substrate pocket. 112-113 (GS) lines the pyridoxal 5'-phosphate pocket. Y144 contributes to the substrate binding site. D245 contacts pyridoxal 5'-phosphate. Substrate contacts are provided by K274 and G307. An N6-(pyridoxal phosphate)lysine modification is found at K274. 308-309 (PT) contributes to the pyridoxal 5'-phosphate binding site. Substrate is bound at residue R391.

Belongs to the class-III pyridoxal-phosphate-dependent aminotransferase family. BioA subfamily. In terms of assembly, homodimer. Pyridoxal 5'-phosphate serves as cofactor.

It is found in the cytoplasm. It carries out the reaction (8S)-8-amino-7-oxononanoate + S-adenosyl-L-methionine = S-adenosyl-4-methylsulfanyl-2-oxobutanoate + (7R,8S)-7,8-diammoniononanoate. The protein operates within cofactor biosynthesis; biotin biosynthesis; 7,8-diaminononanoate from 8-amino-7-oxononanoate (SAM route): step 1/1. Catalyzes the transfer of the alpha-amino group from S-adenosyl-L-methionine (SAM) to 7-keto-8-aminopelargonic acid (KAPA) to form 7,8-diaminopelargonic acid (DAPA). It is the only aminotransferase known to utilize SAM as an amino donor. The chain is Adenosylmethionine-8-amino-7-oxononanoate aminotransferase from Buchnera aphidicola subsp. Schizaphis graminum (strain Sg).